A 450-amino-acid polypeptide reads, in one-letter code: 23S rRNA (uracil(1939)-C(5))-methyltransferase RlmD (450 aa).

The TRAM domain maps to 12-70 (SKQLSAKLSLNVDQLDHLGAGIAQYQGKVVFIPGALPDETVTVQLTEQKKNYARAKLIK). The [4Fe-4S] cluster site is built by Cys-83, Cys-89, Cys-92, and Cys-171. Residues Gln-283, Phe-312, Asn-317, Glu-333, Asp-360, and Asp-380 each coordinate S-adenosyl-L-methionine. Catalysis depends on Cys-406, which acts as the Nucleophile.

This sequence belongs to the class I-like SAM-binding methyltransferase superfamily. RNA M5U methyltransferase family. RlmD subfamily.

The catalysed reaction is uridine(1939) in 23S rRNA + S-adenosyl-L-methionine = 5-methyluridine(1939) in 23S rRNA + S-adenosyl-L-homocysteine + H(+). Functionally, catalyzes the formation of 5-methyl-uridine at position 1939 (m5U1939) in 23S rRNA. In Shewanella putrefaciens (strain CN-32 / ATCC BAA-453), this protein is 23S rRNA (uracil(1939)-C(5))-methyltransferase RlmD.